A 131-amino-acid chain; its full sequence is Small ribosomal subunit protein bS6m (131 aa).

It belongs to the bacterial ribosomal protein bS6 family. In terms of assembly, component of the mitochondrial small ribosomal subunit (mt-SSU). Mature yeast 74S mitochondrial ribosomes consist of a small (37S) and a large (54S) subunit. The 37S small subunit contains a 15S ribosomal RNA (15S mt-rRNA) and 34 different proteins. The 54S large subunit contains a 21S rRNA (21S mt-rRNA) and 46 different proteins.

It localises to the mitochondrion. Its function is as follows. Component of the mitochondrial ribosome (mitoribosome), a dedicated translation machinery responsible for the synthesis of mitochondrial genome-encoded proteins, including at least some of the essential transmembrane subunits of the mitochondrial respiratory chain. The mitoribosomes are attached to the mitochondrial inner membrane and translation products are cotranslationally integrated into the membrane. The protein is Small ribosomal subunit protein bS6m (MRP17) of Saccharomyces cerevisiae (strain ATCC 204508 / S288c) (Baker's yeast).